The following is a 414-amino-acid chain: Histidine--tRNA ligase (414 aa).

This sequence belongs to the class-II aminoacyl-tRNA synthetase family. As to quaternary structure, homodimer.

Its subcellular location is the cytoplasm. It carries out the reaction tRNA(His) + L-histidine + ATP = L-histidyl-tRNA(His) + AMP + diphosphate + H(+). The polypeptide is Histidine--tRNA ligase (Mycoplasma mycoides subsp. mycoides SC (strain CCUG 32753 / NCTC 10114 / PG1)).